Consider the following 620-residue polypeptide: 1-deoxy-D-xylulose-5-phosphate synthase (620 aa).

Thiamine diphosphate contacts are provided by residues His75 and 116-118 (AHS). Asp147 contacts Mg(2+). Thiamine diphosphate-binding positions include 148-149 (GA), Asn177, Tyr284, and Glu366. Asn177 serves as a coordination point for Mg(2+).

It belongs to the transketolase family. DXPS subfamily. Homodimer. Mg(2+) serves as cofactor. Requires thiamine diphosphate as cofactor.

It catalyses the reaction D-glyceraldehyde 3-phosphate + pyruvate + H(+) = 1-deoxy-D-xylulose 5-phosphate + CO2. It functions in the pathway metabolic intermediate biosynthesis; 1-deoxy-D-xylulose 5-phosphate biosynthesis; 1-deoxy-D-xylulose 5-phosphate from D-glyceraldehyde 3-phosphate and pyruvate: step 1/1. In terms of biological role, catalyzes the acyloin condensation reaction between C atoms 2 and 3 of pyruvate and glyceraldehyde 3-phosphate to yield 1-deoxy-D-xylulose-5-phosphate (DXP). In Bordetella pertussis (strain Tohama I / ATCC BAA-589 / NCTC 13251), this protein is 1-deoxy-D-xylulose-5-phosphate synthase.